The chain runs to 378 residues: MQTPKLIRPTLLSMAILSSMAWATGASAALVPPKGYDAPIEKIKTGDHSFSCEAIPKPYTDKLVFRSKYEGSDKARATLNAVSEEAFRDATKDITTLERGVSKVVMQYMRDGRPEQLDCALNMMTTWAKADALESREFNHTGKSMRKWALGSMSSAYLRLKFSESHPLANRQQDAKIIEAWFSKLADQVVSDWSNLPLDKINNHSYWAAWSVMATAVATNRQDLFDWAVKEYKVAANQVDKDGFLPNEMKRRQRALSYHNYALPPLAMIASFAQANGVDLRPENNGALKRLGDRVLAGVKDPSIFAEHNGEKQDMTDLKKDPKFAWLEPYCSLYTCSPDVLEEKHEKQPFKTFRLGGDLTKVYDPSHEKGDKGDNDGS.

Positions 1–28 (MQTPKLIRPTLLSMAILSSMAWATGASA) are cleaved as a signal peptide. Residues 67 to 68 (SK), 140 to 141 (HT), and Y258 each bind substrate. Residues 359–378 (LTKVYDPSHEKGDKGDNDGS) are disordered. Residues 364–378 (DPSHEKGDKGDNDGS) show a composition bias toward basic and acidic residues.

Belongs to the polysaccharide lyase 5 family.

Its subcellular location is the periplasm. The catalysed reaction is Eliminative cleavage of alginate to give oligosaccharides with 4-deoxy-alpha-L-erythro-hex-4-enuronosyl groups at their non-reducing ends and beta-D-mannuronate at their reducing end.. Its function is as follows. Catalyzes the depolymerization of alginate by cleaving the beta-1,4 glycosidic bond between two adjacent sugar residues via a beta-elimination mechanism. May serve to degrade mislocalized alginate that is trapped in the periplasmic space. This Pseudomonas syringae pv. syringae (strain B728a) protein is Alginate lyase.